The sequence spans 291 residues: uncharacterized protein (291 aa).

6 helical membrane-spanning segments follow: residues 13–33, 40–60, 81–101, 128–148, 158–178, and 220–240; these read FDLFFAAIACICGILKVMEMG, LGTVSKNGMAVLAVLVALGFL, GFLNPCVILSVIEFFMMLICI, FGLFGAIFMPYIFAECIRLLL, VILGILVLGCLAMAGLAYLEY, and GNVWMYLAMFASFTLVLILLA. An N-linked (GlcNAc...) asparagine glycan is attached at asparagine 249. The disordered stretch occupies residues 269-291; sequence MASEDPPKDPLPRQEGGGGDTIA.

It is found in the membrane. This is an uncharacterized protein from Encephalitozoon cuniculi (strain GB-M1) (Microsporidian parasite).